A 389-amino-acid chain; its full sequence is S-adenosylmethionine synthase (389 aa).

Residue His17 participates in ATP binding. Asp19 lines the Mg(2+) pocket. Glu45 is a K(+) binding site. Residues Glu58 and Gln101 each coordinate L-methionine. Positions 101–111 (QSPDIGQGVDV) are flexible loop. ATP is bound by residues 160-162 (DGK), 226-227 (RF), Asp235, 241-242 (RK), Ala258, and Lys262. L-methionine is bound at residue Asp235. Lys266 contributes to the L-methionine binding site.

The protein belongs to the AdoMet synthase family. Homotetramer; dimer of dimers. Requires Mg(2+) as cofactor. The cofactor is K(+).

Its subcellular location is the cytoplasm. It carries out the reaction L-methionine + ATP + H2O = S-adenosyl-L-methionine + phosphate + diphosphate. Its pathway is amino-acid biosynthesis; S-adenosyl-L-methionine biosynthesis; S-adenosyl-L-methionine from L-methionine: step 1/1. Its function is as follows. Catalyzes the formation of S-adenosylmethionine (AdoMet) from methionine and ATP. The overall synthetic reaction is composed of two sequential steps, AdoMet formation and the subsequent tripolyphosphate hydrolysis which occurs prior to release of AdoMet from the enzyme. The sequence is that of S-adenosylmethionine synthase from Anaeromyxobacter sp. (strain Fw109-5).